Reading from the N-terminus, the 289-residue chain is F-box protein PP2-A11 (289 aa).

The F-box domain occupies 23–69; that stretch reads QPGLGDLPESCVALILQNLDPVEICRFSKLNTAFHGASWADFVWESK.

As to quaternary structure, part of a SCF (ASK-cullin-F-box) protein ligase complex. Interacts with SKP1A/ASK1.

It is found in the nucleus. It functions in the pathway protein modification; protein ubiquitination. Functionally, component of SCF(ASK-cullin-F-box) E3 ubiquitin ligase complexes, which may mediate the ubiquitination and subsequent proteasomal degradation of target proteins. The sequence is that of F-box protein PP2-A11 (PP2A11) from Arabidopsis thaliana (Mouse-ear cress).